The primary structure comprises 378 residues: Biotin synthase (378 aa).

In terms of domain architecture, Radical SAM core spans 68-292; that stretch reads NEVQISTLLS…IAVTRICCPS (225 aa). [4Fe-4S] cluster-binding residues include cysteine 83, cysteine 87, and cysteine 90. Cysteine 129, cysteine 160, cysteine 220, and arginine 296 together coordinate [2Fe-2S] cluster.

Belongs to the radical SAM superfamily. Biotin synthase family. As to quaternary structure, homodimer. [4Fe-4S] cluster is required as a cofactor. [2Fe-2S] cluster serves as cofactor.

The catalysed reaction is (4R,5S)-dethiobiotin + (sulfur carrier)-SH + 2 reduced [2Fe-2S]-[ferredoxin] + 2 S-adenosyl-L-methionine = (sulfur carrier)-H + biotin + 2 5'-deoxyadenosine + 2 L-methionine + 2 oxidized [2Fe-2S]-[ferredoxin]. The protein operates within cofactor biosynthesis; biotin biosynthesis; biotin from 7,8-diaminononanoate: step 2/2. Its function is as follows. Catalyzes the conversion of dethiobiotin (DTB) to biotin by the insertion of a sulfur atom into dethiobiotin via a radical-based mechanism. This chain is Biotin synthase, found in Psychrobacter arcticus (strain DSM 17307 / VKM B-2377 / 273-4).